The sequence spans 618 residues: 1-deoxy-D-xylulose-5-phosphate synthase (618 aa).

Residues His-76 and 117–119 (GHS) contribute to the thiamine diphosphate site. Asp-148 contributes to the Mg(2+) binding site. Residues 149-150 (GA), Asn-177, Tyr-284, and Glu-364 each bind thiamine diphosphate. Residue Asn-177 participates in Mg(2+) binding.

It belongs to the transketolase family. DXPS subfamily. As to quaternary structure, homodimer. Mg(2+) is required as a cofactor. The cofactor is thiamine diphosphate.

The catalysed reaction is D-glyceraldehyde 3-phosphate + pyruvate + H(+) = 1-deoxy-D-xylulose 5-phosphate + CO2. The protein operates within metabolic intermediate biosynthesis; 1-deoxy-D-xylulose 5-phosphate biosynthesis; 1-deoxy-D-xylulose 5-phosphate from D-glyceraldehyde 3-phosphate and pyruvate: step 1/1. Catalyzes the acyloin condensation reaction between C atoms 2 and 3 of pyruvate and glyceraldehyde 3-phosphate to yield 1-deoxy-D-xylulose-5-phosphate (DXP). The protein is 1-deoxy-D-xylulose-5-phosphate synthase of Francisella philomiragia subsp. philomiragia (strain ATCC 25017 / CCUG 19701 / FSC 153 / O#319-036).